The following is a 719-amino-acid chain: Leucine-rich repeat and fibronectin type-III domain-containing protein 5 (719 aa).

The N-terminal stretch at 1-17 is a signal peptide; sequence MEKFLFYLFLIGIAVRA. An LRRNT domain is found at 18 to 51; that stretch reads QICPKRCVCQILSPNLATLCAKKGLLFVPPNIDR. Over 18–529 the chain is Extracellular; that stretch reads QICPKRCVCQ…MQSQFLGGTM (512 aa). LRR repeat units lie at residues 52–73, 76–97, 100–121, 124–145, 148–169, 172–193, and 196–217; these read RTVE…DFAN, SLVD…AFAD, NLRA…MFSG, NLHH…AFDD, ALEE…AVEK, SLHT…TFSH, and KMTR…PLFQ. N-linked (GlcNAc...) asparagine glycosylation is present at Asn-73. The LRRCT domain occupies 240-286; the sequence is NPLHCNCELLWLRRLSREDDLETCASPALLTGRYFWSIPEEEFLCEP. The Ig-like domain maps to 287–373; the sequence is PLITRHTHEM…GEATQTVDLH (87 aa). Cysteines 308 and 357 form a disulfide. Residues Asn-330, Asn-339, Asn-382, Asn-406, and Asn-452 are each glycosylated (N-linked (GlcNAc...) asparagine). Residues 385–416 are disordered; that stretch reads NHIHEPDPGSSDISTSTKSGSNASSSNGDTKM. Positions 393–412 are enriched in low complexity; sequence GSSDISTSTKSGSNASSSNG. The Fibronectin type-III domain maps to 414–503; it reads TKMSQDKIVV…ITSLTATRVV (90 aa). A helical membrane pass occupies residues 530-550; it reads IIIIGGIIVASVLVFIIILMI. Over 551–719 the chain is Cytoplasmic; that stretch reads RYKVCNNNGQ…VQETQRLESI (169 aa). Over residues 614–627 the composition is skewed to low complexity; the sequence is SETCSSQDSSTTTS. A disordered region spans residues 614-719; the sequence is SETCSSQDSS…VQETQRLESI (106 aa). 3 stretches are compositionally biased toward polar residues: residues 628–641, 654–677, and 702–713; these read ALPP…PVSQ, EPQS…TALQ, and LLTNVDQNVQET.

It belongs to the LRFN family. In terms of assembly, can form heteromeric complexes with LRFN1, LRFN2, LRFN3 and LFRN4. Able to form homomeric complexes across cell junctions, between adjacent cells. Does not interact with DLG1, DLG2 or DLG3. Does not interact with DLG4. In terms of processing, glycosylated. As to expression, predominantly expressed in the brain, with a weak, but broad expression in the cerebral cortex and diencephalic nuclei. Strongly expressed in both the pyramidal layer and the dentate gyrus of the hippocampus. Also detected in other parts of the central nervous system, including the olfactory bulb, pons, cerebellum, and medulla oblongata, as well as in the peripheral nervous system, such as the ganglia of cranial nerves and the dorsal root ganglion during gestation.

It is found in the membrane. Functionally, cell adhesion molecule that mediates homophilic cell-cell adhesion in a Ca(2+)-independent manner. Promotes neurite outgrowth in hippocampal neurons. The chain is Leucine-rich repeat and fibronectin type-III domain-containing protein 5 (Lrfn5) from Mus musculus (Mouse).